Reading from the N-terminus, the 91-residue chain is C-C motif chemokine 5 (91 aa).

Residues 1–23 (MKVSATAFAVLLMAAALCAPASA) form the signal peptide. Intrachain disulfides connect Cys33–Cys57 and Cys34–Cys73.

The protein belongs to the intercrine beta (chemokine CC) family.

The protein localises to the secreted. Its function is as follows. Chemoattractant for blood monocytes, memory T-helper cells and eosinophils. Causes the release of histamine from basophils and activates eosinophils. May activate several chemokine receptors including CCR1, CCR3, CCR4 and CCR5. May also be an agonist of the G protein-coupled receptor GPR75. Together with GPR75, may play a role in neuron survival through activation of a downstream signaling pathway involving the PI3, Akt and MAP kinases. By activating GPR75 may also play a role in insulin secretion by islet cells. The chain is C-C motif chemokine 5 (CCL5) from Bos taurus (Bovine).